The sequence spans 347 residues: Gene 34 protein (347 aa).

The interval Gly-95–Pro-126 is disordered. The segment covering Glu-106–Pro-116 has biased composition (acidic residues).

The protein belongs to the herpesviridae UL95 family.

The sequence is that of Gene 34 protein (34) from Equus caballus (Horse).